A 312-amino-acid chain; its full sequence is Phosphoribosylaminoimidazole-succinocarboxamide synthase (312 aa).

The protein belongs to the SAICAR synthetase family.

It catalyses the reaction 5-amino-1-(5-phospho-D-ribosyl)imidazole-4-carboxylate + L-aspartate + ATP = (2S)-2-[5-amino-1-(5-phospho-beta-D-ribosyl)imidazole-4-carboxamido]succinate + ADP + phosphate + 2 H(+). It participates in purine metabolism; IMP biosynthesis via de novo pathway; 5-amino-1-(5-phospho-D-ribosyl)imidazole-4-carboxamide from 5-amino-1-(5-phospho-D-ribosyl)imidazole-4-carboxylate: step 1/2. The chain is Phosphoribosylaminoimidazole-succinocarboxamide synthase from Legionella pneumophila (strain Lens).